Reading from the N-terminus, the 91-residue chain is Secretoglobin family 3A member 2 (91 aa).

An N-terminal signal peptide occupies residues 1–21; the sequence is MKLVSIFLLVTIGICGYSATA.

This sequence belongs to the secretoglobin family. UGRP subfamily. Homodimer; disulfide-linked. Monomer. Interacts with APOA1. As to expression, highly expressed in lung where it localizes to epithelial cells of the trachea, bronchus and bronchioles (at protein level). Expressed in club cells of the bronchioles. Also detected in the anterior and posterior lobes of the pituitary gland where it may localize to gonadotropic cells (at protein level). Not detected in other tissues tested.

The protein localises to the secreted. Its function is as follows. Secreted cytokine-like protein. Binds to the scavenger receptor MARCO. Can also bind to pathogens including the Gram-positive bacterium L.monocytogenes, the Gram-negative bacterium P.aeruginosa, and yeast. Strongly inhibits phospholipase A2 (PLA2G1B) activity. Seems to have anti-inflammatory effects in respiratory epithelium. Also has anti-fibrotic activity in lung. May play a role in fetal lung development and maturation. Promotes branching morphogenesis during early stages of lung development. In the pituitary, may inhibit production of follicle-stimulating hormone (FSH) and luteinizing hormone (LH). The chain is Secretoglobin family 3A member 2 (Scgb3a2) from Mus musculus (Mouse).